The sequence spans 384 residues: Queuine tRNA-ribosyltransferase (384 aa).

D92 acts as the Proton acceptor in catalysis. Residues 92–96 (DSGGF), D146, Q190, and G217 contribute to the substrate site. Residues 248–254 (GVGRPED) form an RNA binding region. Catalysis depends on D267, which acts as the Nucleophile. The RNA binding; important for wobble base 34 recognition stretch occupies residues 272 to 276 (TRHAR). Residues C305, C307, C310, and H337 each contribute to the Zn(2+) site.

This sequence belongs to the queuine tRNA-ribosyltransferase family. In terms of assembly, homodimer. Within each dimer, one monomer is responsible for RNA recognition and catalysis, while the other monomer binds to the replacement base PreQ1. Requires Zn(2+) as cofactor.

It catalyses the reaction 7-aminomethyl-7-carbaguanine + guanosine(34) in tRNA = 7-aminomethyl-7-carbaguanosine(34) in tRNA + guanine. It participates in tRNA modification; tRNA-queuosine biosynthesis. Functionally, catalyzes the base-exchange of a guanine (G) residue with the queuine precursor 7-aminomethyl-7-deazaguanine (PreQ1) at position 34 (anticodon wobble position) in tRNAs with GU(N) anticodons (tRNA-Asp, -Asn, -His and -Tyr). Catalysis occurs through a double-displacement mechanism. The nucleophile active site attacks the C1' of nucleotide 34 to detach the guanine base from the RNA, forming a covalent enzyme-RNA intermediate. The proton acceptor active site deprotonates the incoming PreQ1, allowing a nucleophilic attack on the C1' of the ribose to form the product. After dissociation, two additional enzymatic reactions on the tRNA convert PreQ1 to queuine (Q), resulting in the hypermodified nucleoside queuosine (7-(((4,5-cis-dihydroxy-2-cyclopenten-1-yl)amino)methyl)-7-deazaguanosine). The protein is Queuine tRNA-ribosyltransferase of Xylella fastidiosa (strain 9a5c).